A 366-amino-acid polypeptide reads, in one-letter code: Spermidine/putrescine import ATP-binding protein PotA (366 aa).

Residues 14 to 247 (ISARALRKVY…PADRFVADFI (234 aa)) enclose the ABC transporter domain. ATP is bound at residue 49 to 56 (GPSGCGKT).

This sequence belongs to the ABC transporter superfamily. Spermidine/putrescine importer (TC 3.A.1.11.1) family. In terms of assembly, the complex is composed of two ATP-binding proteins (PotA), two transmembrane proteins (PotB and PotC) and a solute-binding protein (PotD).

Its subcellular location is the cell inner membrane. It catalyses the reaction ATP + H2O + polyamine-[polyamine-binding protein]Side 1 = ADP + phosphate + polyamineSide 2 + [polyamine-binding protein]Side 1.. Part of the ABC transporter complex PotABCD involved in spermidine/putrescine import. Responsible for energy coupling to the transport system. This is Spermidine/putrescine import ATP-binding protein PotA from Ruegeria pomeroyi (strain ATCC 700808 / DSM 15171 / DSS-3) (Silicibacter pomeroyi).